A 147-amino-acid chain; its full sequence is Probable 4-amino-4-deoxy-L-arabinose-phosphoundecaprenol flippase subunit ArnF (147 aa).

Residues 1-23 lie on the Cytoplasmic side of the membrane; it reads MSNDHPQGQLPASPARSALKGYL. The chain crosses the membrane as a helical span at residues 24–44; that stretch reads YVLGSILLVTAAQLGMKWGVI. At 45–62 the chain is on the periplasmic side; sequence QLPTWQMDLAVMLAHPLP. The helical transmembrane segment at 63-83 threads the bilayer; the sequence is LLVILAGVGCYALSLLCWLAA. Residues 84–93 are Cytoplasmic-facing; that stretch reads LHSTPLNIAY. The chain crosses the membrane as a helical span at residues 94–114; it reads PLLSTSYALVYLLAVNIPLFA. At 115 to 121 the chain is on the periplasmic side; it reads EPLEPGK. Residues 122–142 traverse the membrane as a helical segment; that stretch reads ALGVLFILLGAVLVGIKPAAG. Residues 143–147 lie on the Cytoplasmic side of the membrane; the sequence is TKQTG.

The protein belongs to the ArnF family. In terms of assembly, heterodimer of ArnE and ArnF.

It is found in the cell inner membrane. It functions in the pathway bacterial outer membrane biogenesis; lipopolysaccharide biosynthesis. Translocates 4-amino-4-deoxy-L-arabinose-phosphoundecaprenol (alpha-L-Ara4N-phosphoundecaprenol) from the cytoplasmic to the periplasmic side of the inner membrane. The polypeptide is Probable 4-amino-4-deoxy-L-arabinose-phosphoundecaprenol flippase subunit ArnF (Aeromonas hydrophila subsp. hydrophila (strain ATCC 7966 / DSM 30187 / BCRC 13018 / CCUG 14551 / JCM 1027 / KCTC 2358 / NCIMB 9240 / NCTC 8049)).